Here is a 591-residue protein sequence, read N- to C-terminus: Tricyclene synthase, chloroplastic (591 aa).

A chloroplast-targeting transit peptide spans 1-45 (MATLLQIGSGVIYSNALRKTLRRPQSSTCIIVTETTPCNKSPTVQ). The (2E)-geranyl diphosphate site is built by Arg-302, Asp-339, Asp-343, Arg-481, and Asn-484. Asp-339 and Asp-343 together coordinate Mg(2+). The DDXXD motif signature appears at 339–343 (DDIYD). Residues Asn-484, Thr-488, and Glu-492 each coordinate Mg(2+).

It belongs to the terpene synthase family. Tpsb subfamily. The cofactor is Mg(2+). Mn(2+) serves as cofactor. Predominantly expressed in flowers but also in leaves, siliques and in stems.

The protein resides in the plastid. It is found in the chloroplast stroma. The catalysed reaction is (2E)-geranyl diphosphate = beta-myrcene + diphosphate. It carries out the reaction (2E)-geranyl diphosphate = tricyclene + diphosphate. The enzyme catalyses (2E)-geranyl diphosphate = (E)-beta-ocimene + diphosphate. Its pathway is secondary metabolite biosynthesis; terpenoid biosynthesis. Involved in monoterpene (C10) biosynthesis. The major product is beta-myrcene (56%) followed by (E)-beta-ocimene (20%) and minor amounts (less than 5%) of the cyclic monoterpene (-)-limonene, (+)-limonene, 2-carene and tricyclene. This chain is Tricyclene synthase, chloroplastic, found in Arabidopsis thaliana (Mouse-ear cress).